A 201-amino-acid chain; its full sequence is 3-isopropylmalate dehydratase small subunit (201 aa).

This sequence belongs to the LeuD family. LeuD type 1 subfamily. As to quaternary structure, heterodimer of LeuC and LeuD.

It catalyses the reaction (2R,3S)-3-isopropylmalate = (2S)-2-isopropylmalate. Its pathway is amino-acid biosynthesis; L-leucine biosynthesis; L-leucine from 3-methyl-2-oxobutanoate: step 2/4. Functionally, catalyzes the isomerization between 2-isopropylmalate and 3-isopropylmalate, via the formation of 2-isopropylmaleate. This Shewanella woodyi (strain ATCC 51908 / MS32) protein is 3-isopropylmalate dehydratase small subunit.